The primary structure comprises 433 residues: Signal recognition particle 54 kDa protein (433 aa).

GTP contacts are provided by residues 106–113, 186–190, and 244–247; these read GVEGSGKT, DTAGR, and TKMD.

This sequence belongs to the GTP-binding SRP family. SRP54 subfamily. As to quaternary structure, part of the signal recognition particle protein translocation system, which is composed of SRP and FtsY. Archaeal SRP consists of a 7S RNA molecule of 300 nucleotides and two protein subunits: SRP54 and SRP19.

Its subcellular location is the cytoplasm. It carries out the reaction GTP + H2O = GDP + phosphate + H(+). In terms of biological role, involved in targeting and insertion of nascent membrane proteins into the cytoplasmic membrane. Binds to the hydrophobic signal sequence of the ribosome-nascent chain (RNC) as it emerges from the ribosomes. The SRP-RNC complex is then targeted to the cytoplasmic membrane where it interacts with the SRP receptor FtsY. The protein is Signal recognition particle 54 kDa protein of Pyrobaculum neutrophilum (strain DSM 2338 / JCM 9278 / NBRC 100436 / V24Sta) (Thermoproteus neutrophilus).